A 162-amino-acid polypeptide reads, in one-letter code: ATP synthase subunit b (162 aa).

The helical transmembrane segment at 2 to 22 (LEFNATLLAQIVDFIILLIFL) threads the bilayer.

It belongs to the ATPase B chain family. As to quaternary structure, F-type ATPases have 2 components, F(1) - the catalytic core - and F(0) - the membrane proton channel. F(1) has five subunits: alpha(3), beta(3), gamma(1), delta(1), epsilon(1). F(0) has three main subunits: a(1), b(2) and c(10-14). The alpha and beta chains form an alternating ring which encloses part of the gamma chain. F(1) is attached to F(0) by a central stalk formed by the gamma and epsilon chains, while a peripheral stalk is formed by the delta and b chains.

The protein resides in the cell membrane. Functionally, f(1)F(0) ATP synthase produces ATP from ADP in the presence of a proton or sodium gradient. F-type ATPases consist of two structural domains, F(1) containing the extramembraneous catalytic core and F(0) containing the membrane proton channel, linked together by a central stalk and a peripheral stalk. During catalysis, ATP synthesis in the catalytic domain of F(1) is coupled via a rotary mechanism of the central stalk subunits to proton translocation. Component of the F(0) channel, it forms part of the peripheral stalk, linking F(1) to F(0). This is ATP synthase subunit b from Pelotomaculum thermopropionicum (strain DSM 13744 / JCM 10971 / SI).